The primary structure comprises 325 residues: Retinal homeobox protein Rx-B (325 aa).

The Octapeptide motif signature appears at 32–39; it reads HSIEAILG. Residues 75 to 87 show a composition bias toward basic and acidic residues; sequence TEEIHPQQEHLED. A disordered region spans residues 75–136; the sequence is TEEIHPQQEH…KKKHRRNRTT (62 aa). The span at 99-117 shows a compositional bias: polar residues; sequence AKTSSECLSPGLSTSNSDN. Positions 130–189 form a DNA-binding region, homeobox; the sequence is HRRNRTTFTTYQLHELERAFEKSHYPDVYSREELAMKVNLPEVRVQVWFQNRRAKWRRQE. Positions 302–315 match the OAR motif; sequence NSIASLRMKAKEHI. Positions 308–312 match the Nuclear localization signal motif; that stretch reads RMKAK.

This sequence belongs to the paired homeobox family. Bicoid subfamily. Highly expressed in anterior neural plate followed by neural retina, pigmented epithelium, in pineal gland, diencephalon floor and epiphysis. At later stages, the neuroretina remains the primary site of expression. No expression in the developing lens and cornea.

It localises to the nucleus. In terms of biological role, plays a critical role in eye formation by regulating the initial specification of retinal cells and/or their subsequent proliferation. The sequence is that of Retinal homeobox protein Rx-B (rax-b) from Xenopus laevis (African clawed frog).